The chain runs to 179 residues: ATP-dependent protease subunit HslV (179 aa).

Thr7 is an active-site residue. 3 residues coordinate Na(+): Ala163, Cys166, and Thr169.

Belongs to the peptidase T1B family. HslV subfamily. A double ring-shaped homohexamer of HslV is capped on each side by a ring-shaped HslU homohexamer. The assembly of the HslU/HslV complex is dependent on binding of ATP.

It is found in the cytoplasm. The catalysed reaction is ATP-dependent cleavage of peptide bonds with broad specificity.. Allosterically activated by HslU binding. Protease subunit of a proteasome-like degradation complex believed to be a general protein degrading machinery. This is ATP-dependent protease subunit HslV from Amoebophilus asiaticus (strain 5a2).